Here is a 618-residue protein sequence, read N- to C-terminus: Prothrombin (618 aa).

The N-terminal stretch at 1–24 (MSHVRGLGLPGCLALAALVSLVHS) is a signal peptide. Positions 25-43 (QHVFLAPQQALSLLQRVRR) are excised as a propeptide. Residues 44-90 (ANSGFLEELRKGNLERECVEEQCSYEEAFEALESPQDTDVFWAKYTV) enclose the Gla domain. E50, E51, E58, E60, E63, E64, E69, E70, E73, and E76 each carry 4-carboxyglutamate. A disulfide bond links C61 and C66. 10 disulfide bridges follow: C91-C104, C109-C187, C130-C170, C158-C182, C215-C293, C236-C276, C264-C288, C333-C479, C388-C404, and C533-C547. Kringle domains are found at residues 109 to 187 (CAMD…VPVC) and 215 to 292 (CLTE…NLNY). N-linked (GlcNAc...) asparagine glycosylation is found at N122 and N144. A Peptidase S1 domain is found at 361-615 (IVEGWDAEKG…LKRWIQKVID (255 aa)). Catalysis depends on H403, which acts as the Charge relay system. N-linked (GlcNAc...) asparagine glycosylation is present at N413. D459 functions as the Charge relay system in the catalytic mechanism. The segment at 548–570 (AGFKVNDTKRGDACEGDSGGPFV) is high affinity receptor-binding region which is also known as the TP508 peptide. N553 carries N-linked (GlcNAc...) asparagine glycosylation. A disulfide bridge links C561 with C591. S565 (charge relay system) is an active-site residue.

The protein belongs to the peptidase S1 family. As to quaternary structure, heterodimer (named alpha-thrombin) of a light and a heavy chain; disulfide-linked. Forms a heterodimer with SERPINA5. In plasma, interacts (via N-terminus) with alpha-1-microglobulin; this interaction does not prevent the activation of prothrombin to thrombin. The gamma-carboxyglutamyl residues, which bind calcium ions, result from the carboxylation of glutamyl residues by a microsomal enzyme, the vitamin K-dependent carboxylase. The modified residues are necessary for the calcium-dependent interaction with a negatively charged phospholipid surface, which is essential for the conversion of prothrombin to thrombin. In terms of processing, in the penultimate step of the coagulation cascade, prothrombin is converted to thrombin by the prothrombinase complex composed of factor Xa (F10), cofactor Va (F5), and phospholipids. This activation requires factor Xa-catalyzed sequential cleavage at 2 sites, Arg-311 and Arg-360, along 2 possible pathways. In the first pathway, the first cleavage occurs at Arg-311, leading to the formation of the inactive intermediate prethrombin-2. This pathway preferentially occurs on platelets and in the absence of cofactor Va. In the second pathway, the first cleavage occurs at Arg-360, which separates protease domain into 2 chains that remain connected through a disulfide bond and generates the active intermediate meizothrombin. The presence of cofactor Va directs activation along the meizothrombin pathway and greatly accelerates the rate of cleavage at Arg-360, but has a smaller effect on the cleavage of meizothrombin at Arg-311. Meizothrombin accumulates as an intermediate when prothrombinase is assembled on the membrane of red blood cells.

It carries out the reaction Selective cleavage of Arg-|-Gly bonds in fibrinogen to form fibrin and release fibrinopeptides A and B.. Activity is promoted in the presence of negatively charged surfaces, such as polyphosphate and dextran sulfate. Inhibited by SERPINA5. In terms of biological role, thrombin, which cleaves bonds after Arg and Lys, converts fibrinogen to fibrin and activates factors V, VII, VIII, XIII, and, in complex with thrombomodulin, protein C. Functions in blood homeostasis, inflammation and wound healing. Activates coagulation factor XI (F11); activation is promoted by the contact with negatively charged surfaces. Triggers the production of pro-inflammatory cytokines, such as MCP-1/CCL2 and IL8/CXCL8, in endothelial cells. The protein is Prothrombin (F2) of Mus musculus (Mouse).